A 507-amino-acid chain; its full sequence is Serine/threonine-protein kinase CBK1 (507 aa).

A disordered region spans residues Met-1 to Lys-30. A Protein kinase domain is found at Phe-126–Phe-431. Residues Ile-132 to Val-140 and Lys-155 contribute to the ATP site. Asp-249 functions as the Proton acceptor in the catalytic mechanism. The region spanning Arg-432 to Gly-505 is the AGC-kinase C-terminal domain.

Belongs to the protein kinase superfamily. STE Ser/Thr protein kinase family. COT1 subfamily.

The enzyme catalyses L-seryl-[protein] + ATP = O-phospho-L-seryl-[protein] + ADP + H(+). The catalysed reaction is L-threonyl-[protein] + ATP = O-phospho-L-threonyl-[protein] + ADP + H(+). Its function is as follows. Protein kinase that seems to play a role in signaling pathways necessary for cell growth and mating. This is Serine/threonine-protein kinase CBK1 (CBK1) from Pneumocystis carinii.